The chain runs to 107 residues: Nucleoid-associated protein GOX0603 (107 aa).

Belongs to the YbaB/EbfC family. Homodimer.

The protein localises to the cytoplasm. Its subcellular location is the nucleoid. In terms of biological role, binds to DNA and alters its conformation. May be involved in regulation of gene expression, nucleoid organization and DNA protection. This is Nucleoid-associated protein GOX0603 from Gluconobacter oxydans (strain 621H) (Gluconobacter suboxydans).